The chain runs to 283 residues: NAD kinase (283 aa).

D68 acts as the Proton acceptor in catalysis. Residues 68 to 69, 142 to 143, R153, D172, 183 to 188, and Q242 contribute to the NAD(+) site; these read DG, ND, and TAYSLS.

Belongs to the NAD kinase family. The cofactor is a divalent metal cation.

It is found in the cytoplasm. The enzyme catalyses NAD(+) + ATP = ADP + NADP(+) + H(+). In terms of biological role, involved in the regulation of the intracellular balance of NAD and NADP, and is a key enzyme in the biosynthesis of NADP. Catalyzes specifically the phosphorylation on 2'-hydroxyl of the adenosine moiety of NAD to yield NADP. This Caldanaerobacter subterraneus subsp. tengcongensis (strain DSM 15242 / JCM 11007 / NBRC 100824 / MB4) (Thermoanaerobacter tengcongensis) protein is NAD kinase.